We begin with the raw amino-acid sequence, 160 residues long: Type IV major fimbrial protein FimA (160 aa).

The propeptide at 1-7 is leader sequence; the sequence is MKSLQKG. Phe8 bears the N-methylphenylalanine mark. A helical membrane pass occupies residues 8 to 28; it reads FTLIELMIVVAIIGILAAFAI. Residues Cys63 and Cys105 are joined by a disulfide bond.

The protein belongs to the N-Me-Phe pilin family. As to quaternary structure, the pili are polar flexible filaments of about 5.4 nanometers diameter and 2.5 micrometers average length; they consist of only a single polypeptide chain arranged in a helical configuration of five subunits per turn in the assembled pilus.

Its subcellular location is the fimbrium. The protein resides in the membrane. Major component of the type IV fimbriae that plays an essential role in twitching motility, natural transformation, and protease secretion. The sequence is that of Type IV major fimbrial protein FimA (fimA) from Dichelobacter nodosus (Bacteroides nodosus).